Here is a 457-residue protein sequence, read N- to C-terminus: Siroheme synthase (457 aa).

The tract at residues 1-204 is precorrin-2 dehydrogenase /sirohydrochlorin ferrochelatase; the sequence is MDHLPIFCQL…ADEKAVNATT (204 aa). NAD(+) is bound by residues 22-23 and 43-44; these read DV and LT. Residue S128 is modified to Phosphoserine. The tract at residues 216–457 is uroporphyrinogen-III C-methyltransferase; the sequence is GEVVLVGAGP…RDKLNWFSNH (242 aa). P225 contacts S-adenosyl-L-methionine. Catalysis depends on D248, which acts as the Proton acceptor. The Proton donor role is filled by K270. Residues 301–303, I306, 331–332, M382, and G411 contribute to the S-adenosyl-L-methionine site; these read GGD and TA.

This sequence in the N-terminal section; belongs to the precorrin-2 dehydrogenase / sirohydrochlorin ferrochelatase family. In the C-terminal section; belongs to the precorrin methyltransferase family.

It carries out the reaction uroporphyrinogen III + 2 S-adenosyl-L-methionine = precorrin-2 + 2 S-adenosyl-L-homocysteine + H(+). The catalysed reaction is precorrin-2 + NAD(+) = sirohydrochlorin + NADH + 2 H(+). The enzyme catalyses siroheme + 2 H(+) = sirohydrochlorin + Fe(2+). Its pathway is cofactor biosynthesis; adenosylcobalamin biosynthesis; precorrin-2 from uroporphyrinogen III: step 1/1. It participates in cofactor biosynthesis; adenosylcobalamin biosynthesis; sirohydrochlorin from precorrin-2: step 1/1. The protein operates within porphyrin-containing compound metabolism; siroheme biosynthesis; precorrin-2 from uroporphyrinogen III: step 1/1. It functions in the pathway porphyrin-containing compound metabolism; siroheme biosynthesis; siroheme from sirohydrochlorin: step 1/1. Its pathway is porphyrin-containing compound metabolism; siroheme biosynthesis; sirohydrochlorin from precorrin-2: step 1/1. Multifunctional enzyme that catalyzes the SAM-dependent methylations of uroporphyrinogen III at position C-2 and C-7 to form precorrin-2 via precorrin-1. Then it catalyzes the NAD-dependent ring dehydrogenation of precorrin-2 to yield sirohydrochlorin. Finally, it catalyzes the ferrochelation of sirohydrochlorin to yield siroheme. This Salmonella schwarzengrund (strain CVM19633) protein is Siroheme synthase.